The chain runs to 1122 residues: MNSPNESDGMSGREPSLEILPRTSLHSIPVTVEVKPVLPRAMPSSMGGGGGGSPSPVELRGALVGSVDPTLREQLLQQELLALKQQQQLQKQLLFAEFQKQHDHLTRQHEVQLQKHLKQQQEMLAAKQQQEMLAAKRQQELEQQRQREQQRQEELEKQRLEQQLLILRNKEKSKESAIASTEVKLRLQEFLLSKSKEPTPGGLNHSLPQHPKCWGAHHASLDQSSPPQSGPPGTPPSYKLPLPGPYDSRDDFPLRKTASEPNLKVRSRLKQKVAERRSSPLLRRKDGTVISTFKKRAVEITGAGPGASSVCNSAPGSGPSSPNSSHSTIAENGFTGSVPNIPTEMLPQHRALPLDSSSNQFSLYTSPSLPNISLGLQATVTVTNSHLTASPKLSTQQEAERQALQSLRQGGTLTGKFMSTSSIPGCLLGVALEGDGSPHGHASLLQHVLLLEQARQQSTLIAVPLHGQSPLVTGERVATSMRTVGKLPRHRPLSRTQSSPLPQSPQALQQLVMQQQHQQFLEKQKQQQLQLGKILTKTGELPRQPTTHPEETEEELTEQQEALLGEGALTMPREGSTESESTQEDLEEEDEEEDGEEEEDCIQVKDEEGESGAEEGPDLEEPGAGYKKLFSDAQPLQPLQVYQAPLSLATVPHQALGRTQSSPAAPGGMKSPPDQPVKHLFTTGVVYDTFMLKHQCMCGNTHVHPEHAGRIQSTWSRLQETGLLSKCERIRGRKATLDEIQTVHSEYHTLLYGTSPLNRQKVDSKKLLGPISQKMYAVLPCGGIGVDSDTVWNEMHSSSAVRMAVGCLLELAFKVAAGELKNGFAIIRPPGHHAEESTAMGFCFFNSVAITAKLLQQKLNVGKVLIVDWDIHHGNGTQQAFYNDPSVLYISLHRYDNGNFFPGSGAPEEVGGGPGVGYNVNVAWIGGVDPPIGDVEYLTAFRTVVMPIAHEFSPDVVLVSAGFDAVEGHLSPLGGYSVTARCFGHLTRQLMTLAGGRVVLALEGGHDLTAICDASEACVSALLSVELQPLDEAVLQQKPNINAVATLEKVIEIQSKHWSCVQKFAAGLGRSLREAQAGETEEAETVSAMALLSVGAEQAQAAAAREHSPRPAEEPMEQEPAL.

Residues 1-22 (MNSPNESDGMSGREPSLEILPR) are disordered. Residue Lys-35 forms a Glycyl lysine isopeptide (Lys-Gly) (interchain with G-Cter in SUMO2) linkage. The tract at residues 196–281 (KEPTPGGLNH…KVAERRSSPL (86 aa)) is disordered. Residues 247–258 (DSRDDFPLRKTA) show a composition bias toward basic and acidic residues. Ser-259 bears the Phosphoserine; by AMPK, CaMK1, SIK1 and PKD/PRKD1 mark. Residues 272–281 (KVAERRSSPL) show a composition bias toward basic and acidic residues. Thr-292 bears the Phosphothreonine; by PKC mark. Disordered stretches follow at residues 302 to 343 (GAGP…NIPT) and 481 to 504 (MRTV…LPQS). A compositionally biased stretch (low complexity) spans 312–327 (NSAPGSGPSSPNSSHS). The span at 328 to 340 (TIAENGFTGSVPN) shows a compositional bias: polar residues. A compositionally biased stretch (low complexity) spans 494–504 (SRTQSSPLPQS). Ser-498 carries the post-translational modification Phosphoserine; by AMPK, CaMK1, SIK1 and PKD/PRKD1. The residue at position 533 (Lys-533) is an N6-acetyllysine. Positions 536–625 (TKTGELPRQP…GPDLEEPGAG (90 aa)) are disordered. Positions 581 to 621 (STQEDLEEEDEEEDGEEEEDCIQVKDEEGESGAEEGPDLEE) are enriched in acidic residues. 2 positions are modified to phosphoserine: Ser-611 and Ser-661. The segment at 684-1028 (GVVYDTFMLK…VSALLSVELQ (345 aa)) is histone deacetylase. The Zn(2+) site is built by Cys-696, Cys-698, His-704, and Cys-781. The active site involves His-833. The Nuclear export signal motif lies at 1081–1122 (EEAETVSAMALLSVGAEQAQAAAAREHSPRPAEEPMEQEPAL). Positions 1097 to 1122 (EQAQAAAAREHSPRPAEEPMEQEPAL) are disordered. Over residues 1104-1113 (AREHSPRPAE) the composition is skewed to basic and acidic residues. Residue Ser-1108 is modified to Phosphoserine.

It belongs to the histone deacetylase family. HD type 2 subfamily. Interacts with AHRR, BAHD1, BCOR, HDAC7, HDAC9, CTBP1, MEF2C, NCOR2, NRIP1, PHB2 and a 14-3-3 chaperone protein. Interacts with BCL6, DDIT3/CHOP, GRK5, KDM5B and MYOCD. Interacts with EP300 in the presence of TFAP2C. Interacts with ANKRA2. Interacts with CUL7 (as part of the 3M complex); negatively regulated by ANKRA2. Interacts with ZBTB7B; the interaction allows the recruitment of HDAC4 on CD8 loci for deacetylation and possible inhibition of CD8 genes expression. Interacts with RARA. Phosphorylated by AMPK, CaMK1, SIK1 and PRKD1 at Ser-259 and Ser-498. The phosphorylation is required for the export to the cytoplasm and inhibition. Phosphorylated by the PKC kinases PKN1 and PKN2, impairing nuclear import. Phosphorylated by GRK5, leading to nuclear export of HDAC5 and allowing MEF2-mediated transcription. In terms of processing, ubiquitinated. Polyubiquitination however does not lead to its degradation.

Its subcellular location is the nucleus. It is found in the cytoplasm. It carries out the reaction N(6)-acetyl-L-lysyl-[histone] + H2O = L-lysyl-[histone] + acetate. Functionally, responsible for the deacetylation of lysine residues on the N-terminal part of the core histones (H2A, H2B, H3 and H4). Histone deacetylation gives a tag for epigenetic repression and plays an important role in transcriptional regulation, cell cycle progression and developmental events. Histone deacetylases act via the formation of large multiprotein complexes. Involved in muscle maturation by repressing transcription of myocyte enhancer MEF2C. During muscle differentiation, it shuttles into the cytoplasm, allowing the expression of myocyte enhancer factors. Serves as a corepressor of RARA and causes its deacetylation. In association with RARA, plays a role in the repression of microRNA-10a and thereby in the inflammatory response. This chain is Histone deacetylase 5 (HDAC5), found in Pongo abelii (Sumatran orangutan).